The chain runs to 373 residues: DNA replication and repair protein RecF (373 aa).

An ATP-binding site is contributed by 30–37 (GANGSGKT).

It belongs to the RecF family.

It is found in the cytoplasm. In terms of biological role, the RecF protein is involved in DNA metabolism; it is required for DNA replication and normal SOS inducibility. RecF binds preferentially to single-stranded, linear DNA. It also seems to bind ATP. This Marinobacter nauticus (strain ATCC 700491 / DSM 11845 / VT8) (Marinobacter aquaeolei) protein is DNA replication and repair protein RecF.